We begin with the raw amino-acid sequence, 472 residues long: Phosphoenolpyruvate carboxykinase (ATP), glycosomal (472 aa).

Gly221–Thr228 lines the ATP pocket.

Belongs to the phosphoenolpyruvate carboxykinase (ATP) family. Homodimer.

The protein resides in the glycosome. It carries out the reaction oxaloacetate + ATP = phosphoenolpyruvate + ADP + CO2. It participates in carbohydrate biosynthesis; gluconeogenesis. Functionally, P60 has the capability to bind to microtubules and membrane vesicles in vitro. In Trypanosoma brucei brucei, this protein is Phosphoenolpyruvate carboxykinase (ATP), glycosomal.